The following is a 266-amino-acid chain: 22 kDa alpha-zein 8 (266 aa).

The N-terminal stretch at 1–21 (MATKILALLALLALFVSATNA) is a signal peptide.

It belongs to the zein family.

Its function is as follows. Zeins are major seed storage proteins. In Zea mays (Maize), this protein is 22 kDa alpha-zein 8.